Consider the following 207-residue polypeptide: Uridine kinase (207 aa).

11 to 18 contributes to the ATP binding site; that stretch reads GGSGSGKT.

It belongs to the uridine kinase family.

It localises to the cytoplasm. The enzyme catalyses uridine + ATP = UMP + ADP + H(+). It catalyses the reaction cytidine + ATP = CMP + ADP + H(+). It functions in the pathway pyrimidine metabolism; CTP biosynthesis via salvage pathway; CTP from cytidine: step 1/3. It participates in pyrimidine metabolism; UMP biosynthesis via salvage pathway; UMP from uridine: step 1/1. The polypeptide is Uridine kinase (Staphylococcus haemolyticus (strain JCSC1435)).